The sequence spans 249 residues: Ribosomal RNA small subunit methyltransferase J (249 aa).

Residues 101–102, 117–118, 153–154, and aspartate 171 contribute to the S-adenosyl-L-methionine site; these read RD, ER, and SS.

This sequence belongs to the methyltransferase superfamily. RsmJ family.

The protein localises to the cytoplasm. The catalysed reaction is guanosine(1516) in 16S rRNA + S-adenosyl-L-methionine = N(2)-methylguanosine(1516) in 16S rRNA + S-adenosyl-L-homocysteine + H(+). Its function is as follows. Specifically methylates the guanosine in position 1516 of 16S rRNA. In Salmonella arizonae (strain ATCC BAA-731 / CDC346-86 / RSK2980), this protein is Ribosomal RNA small subunit methyltransferase J.